We begin with the raw amino-acid sequence, 310 residues long: ADP-L-glycero-D-manno-heptose-6-epimerase (310 aa).

NADP(+) is bound by residues 10 to 11 (FI), 31 to 32 (DN), lysine 38, lysine 53, 75 to 79 (EGACS), and asparagine 92. The Proton acceptor role is filled by tyrosine 140. An NADP(+)-binding site is contributed by lysine 144. A substrate-binding site is contributed by asparagine 169. Positions 170 and 178 each coordinate NADP(+). The active-site Proton acceptor is the lysine 178. Substrate-binding positions include serine 180, histidine 187, 201–204 (FEGS), arginine 209, and tyrosine 272.

It belongs to the NAD(P)-dependent epimerase/dehydratase family. HldD subfamily. In terms of assembly, homopentamer. Requires NADP(+) as cofactor.

The enzyme catalyses ADP-D-glycero-beta-D-manno-heptose = ADP-L-glycero-beta-D-manno-heptose. It functions in the pathway nucleotide-sugar biosynthesis; ADP-L-glycero-beta-D-manno-heptose biosynthesis; ADP-L-glycero-beta-D-manno-heptose from D-glycero-beta-D-manno-heptose 7-phosphate: step 4/4. Catalyzes the interconversion between ADP-D-glycero-beta-D-manno-heptose and ADP-L-glycero-beta-D-manno-heptose via an epimerization at carbon 6 of the heptose. The polypeptide is ADP-L-glycero-D-manno-heptose-6-epimerase (Salmonella arizonae (strain ATCC BAA-731 / CDC346-86 / RSK2980)).